A 1529-amino-acid polypeptide reads, in one-letter code: DNA-directed RNA polymerase subunit beta' (1529 aa).

Zn(2+) is bound by residues cysteine 156, cysteine 158, cysteine 183, and cysteine 186. Mg(2+) is bound by residues aspartate 1328, aspartate 1330, and aspartate 1332.

It belongs to the RNA polymerase beta' chain family. RpoC1 subfamily. In terms of assembly, in plastids the minimal PEP RNA polymerase catalytic core is composed of four subunits: alpha, beta, beta', and beta''. When a (nuclear-encoded) sigma factor is associated with the core the holoenzyme is formed, which can initiate transcription. It depends on Mg(2+) as a cofactor. Zn(2+) serves as cofactor.

It is found in the plastid. Its subcellular location is the chloroplast. It carries out the reaction RNA(n) + a ribonucleoside 5'-triphosphate = RNA(n+1) + diphosphate. Functionally, DNA-dependent RNA polymerase catalyzes the transcription of DNA into RNA using the four ribonucleoside triphosphates as substrates. The polypeptide is DNA-directed RNA polymerase subunit beta' (Tetradesmus obliquus (Green alga)).